The sequence spans 24 residues: Brevinin-1HSa (24 aa).

Cys18 and Cys24 are disulfide-bonded.

As to expression, expressed by the skin glands.

The protein localises to the secreted. Functionally, has antibacterial activity against the Gram-positive bacterium S.aureus ATCC 25923 (MIC=3 uM) and the Gram-negative bacterium E.coli ATCC 25726 (MIC=24 uM). The polypeptide is Brevinin-1HSa (Odorrana hosii (Hose's rock frog)).